A 347-amino-acid polypeptide reads, in one-letter code: Serpentine receptor class beta-2 (347 aa).

Helical transmembrane passes span 27-47 (IAQL…YIFL), 62-82 (FLLV…AFLF), 108-128 (GNLS…GFSI), 146-166 (FLGP…LYHV), 194-214 (FWEL…FLLV), 246-266 (LIVS…TIFV), and 288-308 (ITVP…LSFM).

It belongs to the nematode receptor-like protein srb family.

The protein resides in the membrane. This Caenorhabditis elegans protein is Serpentine receptor class beta-2 (srb-2).